The primary structure comprises 436 residues: GTPase Der (436 aa).

EngA-type G domains lie at Pro-4–Pro-167 and Val-176–Ala-351. GTP is bound by residues Gly-10–Ser-17, Asp-57–Ile-61, Asn-119–Asp-122, Gly-182–Ser-189, Asp-229–Met-233, and Asn-294–Asp-297. The 85-residue stretch at Met-352–Lys-436 folds into the KH-like domain.

This sequence belongs to the TRAFAC class TrmE-Era-EngA-EngB-Septin-like GTPase superfamily. EngA (Der) GTPase family. In terms of assembly, associates with the 50S ribosomal subunit.

GTPase that plays an essential role in the late steps of ribosome biogenesis. This chain is GTPase Der, found in Bacillus pumilus (strain SAFR-032).